Here is a 697-residue protein sequence, read N- to C-terminus: Histone deacetylase HOS3 (697 aa).

A histone deacetylase region spans residues 40–440 (AKAVVVLSPY…LIGLQNQDWV (401 aa)). His-196 is an active-site residue. The segment at 525 to 573 (IRSHRSNASPEKELHENKPRSTEKQEQREIRSDTKVKQLSSNNRAAETQ) is disordered. Residues 534-560 (PEKELHENKPRSTEKQEQREIRSDTKV) are compositionally biased toward basic and acidic residues. The segment covering 561–573 (KQLSSNNRAAETQ) has biased composition (polar residues). Phosphoserine occurs at positions 582, 583, 613, and 629. Residues 625–638 (GDEDSDHELKEKNW) are compositionally biased toward basic and acidic residues. The segment at 625-697 (GDEDSDHELK…KHTTRSGGRW (73 aa)) is disordered. The segment covering 665–674 (QPQNANTPTY) has biased composition (polar residues).

It belongs to the histone deacetylase family. HD type 1 subfamily. In terms of assembly, homodimer.

The protein resides in the nucleus. It carries out the reaction N(6)-acetyl-L-lysyl-[histone] + H2O = L-lysyl-[histone] + acetate. In terms of biological role, responsible for the deacetylation of lysine residues on the N-terminal part of the core histones (H2A, H2B, H3 and H4). Histone deacetylation gives a tag for epigenetic repression and plays an important role in transcriptional regulation, cell cycle progression and developmental events. Histone deacetylases act via the formation of large multiprotein complexes. The sequence is that of Histone deacetylase HOS3 (HOS3) from Saccharomyces cerevisiae (strain ATCC 204508 / S288c) (Baker's yeast).